The primary structure comprises 93 residues: DNA-directed RNA polymerase subunit omega (93 aa).

It belongs to the RNA polymerase subunit omega family. As to quaternary structure, the RNAP catalytic core consists of 2 alpha, 1 beta, 1 beta' and 1 omega subunit. When a sigma factor is associated with the core the holoenzyme is formed, which can initiate transcription.

It carries out the reaction RNA(n) + a ribonucleoside 5'-triphosphate = RNA(n+1) + diphosphate. Its function is as follows. Promotes RNA polymerase assembly. Latches the N- and C-terminal regions of the beta' subunit thereby facilitating its interaction with the beta and alpha subunits. This Acinetobacter baylyi (strain ATCC 33305 / BD413 / ADP1) protein is DNA-directed RNA polymerase subunit omega.